The sequence spans 538 residues: Syncytin-1 (538 aa).

Residues 1–20 (MALPYHILLFTVLLPSFTLT) form the signal peptide. The Extracellular portion of the chain corresponds to 21 to 443 (APPPCRCMTS…NTGPWGLLSQ (423 aa)). An N-linked (GlcNAc...) asparagine glycan is attached at Asn-169. Positions 186–189 (CWIC) match the CXXC motif. 3 disulfide bridges follow: Cys-186-Cys-189, Cys-186-Cys-405, and Cys-397-Cys-404. Residues Asn-208, Asn-214, Asn-234, and Asn-281 are each glycosylated (N-linked (GlcNAc...) asparagine). The fusion peptide stretch occupies residues 320–340 (ILPFVIGAGVLGALGTGIGGI). Residues 380–396 (LQNRRALDLLTAERGGT) are immunosuppression. The short motif at 397-405 (CLFLGEECC) is the CX6CC element. An N-linked (GlcNAc...) asparagine glycan is attached at Asn-409. The helical transmembrane segment at 444 to 464 (WMPWILPFLGPLAAIILLLLF) threads the bilayer. The segment at 465–484 (GPCIFNLLVNFVSSRIEAVK) is essential for the fusiogenic function. Topologically, residues 465–538 (GPCIFNLLVN…LLRPNSAGSS (74 aa)) are cytoplasmic. The segment at 496-538 (KIYRRPLDRPASPRSDVNDIKCTPPEEISTAQPLLRPNSAGSS) is disordered.

It belongs to the gamma type-C retroviral envelope protein family. HERV class-I W env subfamily. The mature envelope protein (Env) consists of a trimer of SU-TM heterodimers attached probably by a labile interchain disulfide bond. Interacts with the C-type lectin CD209/DC-SIGN. In terms of processing, specific enzymatic cleavages in vivo yield mature proteins. Envelope glycoproteins are synthesized as an inactive precursor that is heavily N-glycosylated and processed likely by furin in the Golgi to yield the mature SU and TM proteins. The cleavage site between SU and TM requires the minimal sequence [KR]-X-[KR]-R. Post-translationally, the CXXC motif is highly conserved across a broad range of retroviral envelope proteins. It is thought to participate in the formation of a labile disulfide bond possibly with the CX6CC motif present in the transmembrane protein.

Its subcellular location is the cell membrane. The protein resides in the virion. Its function is as follows. This endogenous retroviral envelope protein has retained its original fusogenic properties and participates in trophoblast fusion and the formation of a syncytium during placenta morphogenesis. May recognize and induce fusion through binding of SLC1A4 and SLC1A5. Functionally, endogenous envelope proteins may have kept, lost or modified their original function during evolution. Retroviral envelope proteins mediate receptor recognition and membrane fusion during early infection. The surface protein (SU) mediates receptor recognition, while the transmembrane protein (TM) acts as a class I viral fusion protein. The protein may have at least 3 conformational states: pre-fusion native state, pre-hairpin intermediate state, and post-fusion hairpin state. During viral and target cell membrane fusion, the coiled coil regions (heptad repeats) assume a trimer-of-hairpins structure, positioning the fusion peptide in close proximity to the C-terminal region of the ectodomain. The formation of this structure appears to drive apposition and subsequent fusion of membranes. This Gorilla gorilla gorilla (Western lowland gorilla) protein is Syncytin-1 (ERVW-1).